The sequence spans 102 residues: Large ribosomal subunit protein bL21 (102 aa).

This sequence belongs to the bacterial ribosomal protein bL21 family. Part of the 50S ribosomal subunit. Contacts protein L20.

Functionally, this protein binds to 23S rRNA in the presence of protein L20. The chain is Large ribosomal subunit protein bL21 from Geobacter metallireducens (strain ATCC 53774 / DSM 7210 / GS-15).